A 231-amino-acid polypeptide reads, in one-letter code: Potassium/proton antiporter CemA (231 aa).

3 helical membrane-spanning segments follow: residues 9–29 (FIPLLYLTSIVFLPWWVSFLF), 116–136 (IICFIILSGYSILSNEELIIL), and 191–211 (IISGLVSTFPVILDTIFKYWI).

The protein belongs to the CemA family.

It is found in the plastid. The protein resides in the chloroplast inner membrane. The enzyme catalyses K(+)(in) + H(+)(out) = K(+)(out) + H(+)(in). Its function is as follows. Contributes to K(+)/H(+) antiport activity by supporting proton efflux to control proton extrusion and homeostasis in chloroplasts in a light-dependent manner to modulate photosynthesis. Prevents excessive induction of non-photochemical quenching (NPQ) under continuous-light conditions. Indirectly promotes efficient inorganic carbon uptake into chloroplasts. This Manihot esculenta (Cassava) protein is Potassium/proton antiporter CemA.